Reading from the N-terminus, the 315-residue chain is Ribosomal RNA small subunit methyltransferase H (315 aa).

S-adenosyl-L-methionine contacts are provided by residues 35 to 37 (GGH), Asp-55, Phe-80, Asp-102, and Gln-109.

This sequence belongs to the methyltransferase superfamily. RsmH family.

The protein resides in the cytoplasm. The catalysed reaction is cytidine(1402) in 16S rRNA + S-adenosyl-L-methionine = N(4)-methylcytidine(1402) in 16S rRNA + S-adenosyl-L-homocysteine + H(+). Functionally, specifically methylates the N4 position of cytidine in position 1402 (C1402) of 16S rRNA. This chain is Ribosomal RNA small subunit methyltransferase H, found in Shewanella halifaxensis (strain HAW-EB4).